Consider the following 202-residue polypeptide: GTP cyclohydrolase 1 (202 aa).

C93, H96, and C164 together coordinate Zn(2+).

This sequence belongs to the GTP cyclohydrolase I family. Toroid-shaped homodecamer, composed of two pentamers of five dimers.

It carries out the reaction GTP + H2O = 7,8-dihydroneopterin 3'-triphosphate + formate + H(+). Its pathway is cofactor biosynthesis; 7,8-dihydroneopterin triphosphate biosynthesis; 7,8-dihydroneopterin triphosphate from GTP: step 1/1. In Pelagibacter ubique (strain HTCC1062), this protein is GTP cyclohydrolase 1.